The sequence spans 750 residues: Photosystem I P700 chlorophyll a apoprotein A1 (750 aa).

A run of 8 helical transmembrane segments spans residues 70–93 (VFSA…FHGA), 156–179 (LYCT…FHYH), 195–219 (LNHH…HVSL), 291–309 (IAHH…GHMY), 346–369 (WHAQ…HHMY), 385–411 (LSLF…IFMV), 433–455 (AIIS…LYIH), and 531–549 (FLVH…LILL). 2 residues coordinate [4Fe-4S] cluster: cysteine 573 and cysteine 582. A run of 2 helical transmembrane segments spans residues 589–610 (HVFL…HFSW) and 664–686 (LSAY…MFLF). Histidine 675 contacts chlorophyll a'. Residues methionine 683 and tyrosine 691 each contribute to the chlorophyll a site. Tryptophan 692 lines the phylloquinone pocket. Residues 724–744 (TVGVTHYLLGGIATTWAFFLA) form a helical membrane-spanning segment.

The protein belongs to the PsaA/PsaB family. As to quaternary structure, the PsaA/B heterodimer binds the P700 chlorophyll special pair and subsequent electron acceptors. PSI consists of a core antenna complex that captures photons, and an electron transfer chain that converts photonic excitation into a charge separation. The eukaryotic PSI reaction center is composed of at least 11 subunits. It depends on P700 is a chlorophyll a/chlorophyll a' dimer, A0 is one or more chlorophyll a, A1 is one or both phylloquinones and FX is a shared 4Fe-4S iron-sulfur center. as a cofactor.

It is found in the plastid. Its subcellular location is the chloroplast thylakoid membrane. The enzyme catalyses reduced [plastocyanin] + hnu + oxidized [2Fe-2S]-[ferredoxin] = oxidized [plastocyanin] + reduced [2Fe-2S]-[ferredoxin]. Functionally, psaA and PsaB bind P700, the primary electron donor of photosystem I (PSI), as well as the electron acceptors A0, A1 and FX. PSI is a plastocyanin-ferredoxin oxidoreductase, converting photonic excitation into a charge separation, which transfers an electron from the donor P700 chlorophyll pair to the spectroscopically characterized acceptors A0, A1, FX, FA and FB in turn. Oxidized P700 is reduced on the lumenal side of the thylakoid membrane by plastocyanin. The sequence is that of Photosystem I P700 chlorophyll a apoprotein A1 from Oenothera elata subsp. hookeri (Hooker's evening primrose).